The following is a 338-amino-acid chain: MKVFYDKDADLSLIKGKNVTIIGYGSQGHAHALNLKDSGVNVTVGLRKSGASWNKAVNAGLQVKEVAEAVKGADVVMILLPDEQIADVYKNEVHDNIKAGAALAFAHGFNVHYGAVVPRADVDVIMIAPKAPGHTVRATYTQGGGVPHLIAVYQDKSGSARDVALSYATANGGGRAGIIETNFREETETDLFGEQAVLCGGTVELIKAGFETLVEAGYAPEMAYFECLHELKLIVDLIYEGGIANMNYSISNNAEYGEYVTGPRIVTEETKKAMKQCLKDIQTGEYAKSFLLENKAGAPTLSSRRRLNAEHQIEVVGEKLRAMMPWIAKNKMVDQSKN.

One can recognise a KARI N-terminal Rossmann domain in the interval 1-181 (MKVFYDKDAD…GGGRAGIIET (181 aa)). NADP(+)-binding positions include 24 to 27 (YGSQ), Arg47, and Ser52. The active site involves His107. NADP(+) is bound at residue Gly133. Residues 182-327 (NFREETETDL…EKLRAMMPWI (146 aa)) enclose the KARI C-terminal knotted domain. Mg(2+)-binding residues include Asp190, Glu194, Glu226, and Glu230. Residue Ser251 coordinates substrate.

The protein belongs to the ketol-acid reductoisomerase family. It depends on Mg(2+) as a cofactor.

The catalysed reaction is (2R)-2,3-dihydroxy-3-methylbutanoate + NADP(+) = (2S)-2-acetolactate + NADPH + H(+). It carries out the reaction (2R,3R)-2,3-dihydroxy-3-methylpentanoate + NADP(+) = (S)-2-ethyl-2-hydroxy-3-oxobutanoate + NADPH + H(+). It participates in amino-acid biosynthesis; L-isoleucine biosynthesis; L-isoleucine from 2-oxobutanoate: step 2/4. It functions in the pathway amino-acid biosynthesis; L-valine biosynthesis; L-valine from pyruvate: step 2/4. In terms of biological role, involved in the biosynthesis of branched-chain amino acids (BCAA). Catalyzes an alkyl-migration followed by a ketol-acid reduction of (S)-2-acetolactate (S2AL) to yield (R)-2,3-dihydroxy-isovalerate. In the isomerase reaction, S2AL is rearranged via a Mg-dependent methyl migration to produce 3-hydroxy-3-methyl-2-ketobutyrate (HMKB). In the reductase reaction, this 2-ketoacid undergoes a metal-dependent reduction by NADPH to yield (R)-2,3-dihydroxy-isovalerate. The protein is Ketol-acid reductoisomerase (NADP(+)) of Cupriavidus pinatubonensis (strain JMP 134 / LMG 1197) (Cupriavidus necator (strain JMP 134)).